The sequence spans 489 residues: Protein TOS4 (489 aa).

Polar residues-rich tracts occupy residues 1 to 10 (MSSQFPSSPY) and 20 to 32 (NYKQQPNCPSSNY). Positions 1-101 (MSSQFPSSPY…FSSKLSSPSR (101 aa)) are disordered. Ser-40 bears the Phosphoserine mark. Over residues 56-68 (PSSSIGRVSSPVR) the composition is skewed to polar residues. Residues 89–100 (SPKFSSKLSSPS) show a composition bias toward low complexity. Ser-100 bears the Phosphoserine mark. In terms of domain architecture, FHA spans 118-170 (ITVGRNSSQCDVALCKNKFISRVHASITYLPQTNEVKIHCFSMNGLIVTYRKQ). Residues 316 to 366 (SSPLSSVSSVDHEEQTLRQDSLSSDKNPMTMKKPKLNKRVLPSKPKKSVKE) form a disordered region. Positions 333–342 (RQDSLSSDKN) are enriched in polar residues.

This sequence belongs to the PLM2/TOS4 family. Phosphorylated by CDC28.

The protein localises to the nucleus. Its function is as follows. Binds to the promoters of genes with functions important for the G1/S (start) transition; primarily genes involved in pheromone response, polarized growth and transcription. This chain is Protein TOS4 (TOS4), found in Saccharomyces cerevisiae (strain ATCC 204508 / S288c) (Baker's yeast).